Here is a 476-residue protein sequence, read N- to C-terminus: 3-isopropylmalate dehydratase large subunit (476 aa).

[4Fe-4S] cluster-binding residues include cysteine 357, cysteine 417, and cysteine 420.

This sequence belongs to the aconitase/IPM isomerase family. LeuC type 1 subfamily. In terms of assembly, heterodimer of LeuC and LeuD. It depends on [4Fe-4S] cluster as a cofactor.

The enzyme catalyses (2R,3S)-3-isopropylmalate = (2S)-2-isopropylmalate. Its pathway is amino-acid biosynthesis; L-leucine biosynthesis; L-leucine from 3-methyl-2-oxobutanoate: step 2/4. In terms of biological role, catalyzes the isomerization between 2-isopropylmalate and 3-isopropylmalate, via the formation of 2-isopropylmaleate. This Mycobacterium avium (strain 104) protein is 3-isopropylmalate dehydratase large subunit.